A 480-amino-acid chain; its full sequence is Glutamyl-tRNA(Gln) amidotransferase subunit A (480 aa).

Catalysis depends on charge relay system residues Lys-70 and Ser-145. Ser-169 (acyl-ester intermediate) is an active-site residue.

This sequence belongs to the amidase family. GatA subfamily. As to quaternary structure, heterotrimer of A, B and C subunits.

It carries out the reaction L-glutamyl-tRNA(Gln) + L-glutamine + ATP + H2O = L-glutaminyl-tRNA(Gln) + L-glutamate + ADP + phosphate + H(+). In terms of biological role, allows the formation of correctly charged Gln-tRNA(Gln) through the transamidation of misacylated Glu-tRNA(Gln) in organisms which lack glutaminyl-tRNA synthetase. The reaction takes place in the presence of glutamine and ATP through an activated gamma-phospho-Glu-tRNA(Gln). The protein is Glutamyl-tRNA(Gln) amidotransferase subunit A of Lactobacillus delbrueckii subsp. bulgaricus (strain ATCC 11842 / DSM 20081 / BCRC 10696 / JCM 1002 / NBRC 13953 / NCIMB 11778 / NCTC 12712 / WDCM 00102 / Lb 14).